We begin with the raw amino-acid sequence, 231 residues long: NADH-ubiquinone oxidoreductase chain 4 (231 aa).

7 helical membrane-spanning segments follow: residues 1-21 (PIAG…YGII), 34-54 (VFLP…LTCL), 61-80 (SLIA…AIII), 84-106 (WGLS…LFCL), 128-148 (ILPM…ATPP), 156-176 (LLII…LGLS), and 211-231 (LLMI…ELVI).

The protein belongs to the complex I subunit 4 family.

The protein localises to the mitochondrion membrane. It carries out the reaction a ubiquinone + NADH + 5 H(+)(in) = a ubiquinol + NAD(+) + 4 H(+)(out). Functionally, core subunit of the mitochondrial membrane respiratory chain NADH dehydrogenase (Complex I) that is believed to belong to the minimal assembly required for catalysis. Complex I functions in the transfer of electrons from NADH to the respiratory chain. The immediate electron acceptor for the enzyme is believed to be ubiquinone. The polypeptide is NADH-ubiquinone oxidoreductase chain 4 (MT-ND4) (Tropidolaemus wagleri (Wagler's pit viper)).